Consider the following 456-residue polypeptide: Aminotransferase ALD1, chloroplastic (456 aa).

A chloroplast-targeting transit peptide spans 1–43 (MVSLMFFSSASPLCSSPSKIPKASLDFEMKKLGGSTKLVRNVN). Pyridoxal 5'-phosphate-binding positions include Y108, 142-143 (AQ), N223, D251, Y254, S281, S283, R292, and N323.

This sequence belongs to the class-I pyridoxal-phosphate-dependent aminotransferase family. LL-diaminopimelate aminotransferase subfamily. Pyridoxal 5'-phosphate is required as a cofactor. Highly expressed in senescing leaves, flowers, siliques and seeds.

It is found in the plastid. Its subcellular location is the chloroplast. Functionally, aminotransferase involved in local and systemic acquired resistance (SAR) to the bacterial pathogen P.syringae. Required for salicylic acid (SA) and camalexin accumulation upon pathogen infection. Possesses aminotransferase activity in vitro and may generate amino-acid-derived defense signals in vivo. May be involved in ethylene-induced senescence signaling. Involved in the biosynthesis of pipecolate (Pip), a metabolite that orchestrates defense amplification, positive regulation of SA biosynthesis, and priming to guarantee effective local resistance induction and the establishment of SAR. Converts lysine to alpha-keto-epsilon-aminocaproate, which then can spontaneously cyclize to form delta-(1)-piperideine-2-carboxylate (P2C). P2C is converted to Pip by SARD4. May produce non-Pip metabolites that play roles in immunity. Involved in the synthesis of distinct metabolite signals that affect basal and early defenses, and later defense responses. This chain is Aminotransferase ALD1, chloroplastic, found in Arabidopsis thaliana (Mouse-ear cress).